We begin with the raw amino-acid sequence, 152 residues long: Syntaxin-8A (152 aa).

The segment covering 1-14 has biased composition (low complexity); sequence MNNNNNFNSNFNSN. A disordered region spans residues 1–22; the sequence is MNNNNNFNSNFNSNRISSTQPY. Residues 1–131 lie on the Cytoplasmic side of the membrane; sequence MNNNNNFNSN…LTQQSKTTGY (131 aa). Residues 60-122 enclose the t-SNARE coiled-coil homology domain; it reads KRDMEEQDKM…RNTTKNLITL (63 aa). A helical; Anchor for type IV membrane protein transmembrane segment spans residues 132–152; sequence CSAICFLLLVLLVIIILASVL.

The protein belongs to the syntaxin family. In terms of assembly, component of the SNARE complex composed of syn7A, syn8A, vamp7A and vti1A.

It is found in the endosome membrane. Its function is as follows. Involved in the targeting and/or fusion of transport vesicles to their target membrane during transport of proteins from the early endosome to the lysosome. Required for fusion of late endosomes with lysosomes and homotypic lysosomal fusion. The chain is Syntaxin-8A from Dictyostelium discoideum (Social amoeba).